A 471-amino-acid polypeptide reads, in one-letter code: UDP-N-acetylmuramate--L-alanine ligase (471 aa).

ATP is bound at residue 114-120; sequence GTHGKTT.

It belongs to the MurCDEF family.

The protein localises to the cytoplasm. It catalyses the reaction UDP-N-acetyl-alpha-D-muramate + L-alanine + ATP = UDP-N-acetyl-alpha-D-muramoyl-L-alanine + ADP + phosphate + H(+). Its pathway is cell wall biogenesis; peptidoglycan biosynthesis. Cell wall formation. The polypeptide is UDP-N-acetylmuramate--L-alanine ligase (Sinorhizobium medicae (strain WSM419) (Ensifer medicae)).